A 285-amino-acid polypeptide reads, in one-letter code: 4-diphosphocytidyl-2-C-methyl-D-erythritol kinase (285 aa).

Residue Lys-12 is part of the active site. 94 to 104 (PAQAGMGGGSS) contacts ATP. Residue Asp-136 is part of the active site.

The protein belongs to the GHMP kinase family. IspE subfamily.

The catalysed reaction is 4-CDP-2-C-methyl-D-erythritol + ATP = 4-CDP-2-C-methyl-D-erythritol 2-phosphate + ADP + H(+). It functions in the pathway isoprenoid biosynthesis; isopentenyl diphosphate biosynthesis via DXP pathway; isopentenyl diphosphate from 1-deoxy-D-xylulose 5-phosphate: step 3/6. Catalyzes the phosphorylation of the position 2 hydroxy group of 4-diphosphocytidyl-2C-methyl-D-erythritol. The sequence is that of 4-diphosphocytidyl-2-C-methyl-D-erythritol kinase from Paracidovorax citrulli (strain AAC00-1) (Acidovorax citrulli).